The sequence spans 360 residues: 3-dehydroquinate synthase (360 aa).

NAD(+)-binding positions include 72–77 (DGEEYK), 106–110 (GVIGD), 130–131 (TT), K143, and K152. Zn(2+) is bound by residues E185, H248, and H265.

The protein belongs to the sugar phosphate cyclases superfamily. Dehydroquinate synthase family. Requires Co(2+) as cofactor. Zn(2+) is required as a cofactor. NAD(+) serves as cofactor.

It localises to the cytoplasm. The enzyme catalyses 7-phospho-2-dehydro-3-deoxy-D-arabino-heptonate = 3-dehydroquinate + phosphate. The protein operates within metabolic intermediate biosynthesis; chorismate biosynthesis; chorismate from D-erythrose 4-phosphate and phosphoenolpyruvate: step 2/7. Its function is as follows. Catalyzes the conversion of 3-deoxy-D-arabino-heptulosonate 7-phosphate (DAHP) to dehydroquinate (DHQ). The sequence is that of 3-dehydroquinate synthase from Geotalea uraniireducens (strain Rf4) (Geobacter uraniireducens).